Here is a 282-residue protein sequence, read N- to C-terminus: Polyamine aminopropyltransferase (282 aa).

Positions isoleucine 11–lysine 239 constitute a PABS domain. Position 36 (glutamine 36) interacts with S-methyl-5'-thioadenosine. The spermidine site is built by histidine 67 and aspartate 91. S-methyl-5'-thioadenosine-binding positions include glutamate 111 and aspartate 142–glycine 143. The active-site Proton acceptor is aspartate 160. Spermidine is bound at residue aspartate 160–aspartate 163. Residue proline 167 participates in S-methyl-5'-thioadenosine binding.

The protein belongs to the spermidine/spermine synthase family. In terms of assembly, homodimer or homotetramer.

Its subcellular location is the cytoplasm. It catalyses the reaction S-adenosyl 3-(methylsulfanyl)propylamine + putrescine = S-methyl-5'-thioadenosine + spermidine + H(+). The protein operates within amine and polyamine biosynthesis; spermidine biosynthesis; spermidine from putrescine: step 1/1. Catalyzes the irreversible transfer of a propylamine group from the amino donor S-adenosylmethioninamine (decarboxy-AdoMet) to putrescine (1,4-diaminobutane) to yield spermidine. This Thermococcus onnurineus (strain NA1) protein is Polyamine aminopropyltransferase.